Here is a 208-residue protein sequence, read N- to C-terminus: Ribosomal RNA small subunit methyltransferase G (208 aa).

S-adenosyl-L-methionine is bound by residues Gly-74, Leu-79, 125–126, and Arg-140; that span reads VE.

Belongs to the methyltransferase superfamily. RNA methyltransferase RsmG family.

It is found in the cytoplasm. The catalysed reaction is guanosine(527) in 16S rRNA + S-adenosyl-L-methionine = N(7)-methylguanosine(527) in 16S rRNA + S-adenosyl-L-homocysteine. Functionally, specifically methylates the N7 position of guanine in position 527 of 16S rRNA. This is Ribosomal RNA small subunit methyltransferase G from Shewanella denitrificans (strain OS217 / ATCC BAA-1090 / DSM 15013).